The primary structure comprises 488 residues: MWENKFEKESLTFDDVLLLPAESDVLPKEVDLSVQLSEGIKLNIPVISAGMDTVTESKMAISMARQGGLGVIHKNMNIEDQADEVQKVKRSENGVISNPFFLTPEESVFEAEALMGKYRISGVPIVNNKEDRQFVGIITNRDLRFIEDFSIKISDVMTKEQLVTAPVGTTLDEAEKLLQQHKIEKLPLVKEGRLEGLITIKDIEKVLEFPNSAKDEHGRLLVGAAIGIAKDTDIRAQKLVEAGVDALVIDTAHGHSKGVLEQVKHIKETFPQVTLIAGNVATAEGTKALYEAGADVVKVGIGPGSICTTRVVAGVGVPQITAVYDCATEARKHGKAIIADGGIKFSGDIIKALAAGGHAVMLGSLLAGTEESPGATEVFQGRQYKVYRGMGSLGAMESGSNDRYFQEDKAPKKFVPEGIEGRIAYKGSLQDTIYQLMGGVRSGMGYTGSRNLEALREEAQFTRMGPAGLAESHPHDVQITKESPNYSF.

2 consecutive CBS domains span residues 95–153 (VISN…SIKI) and 157–216 (MTKE…AKDE). NAD(+)-binding positions include aspartate 250 and 300–302 (GIG). K(+) is bound by residues glycine 302 and glycine 304. An IMP-binding site is contributed by serine 305. Cysteine 307 is a K(+) binding site. Cysteine 307 functions as the Thioimidate intermediate in the catalytic mechanism. Residues 340 to 342 (DGG), 363 to 364 (GS), and 387 to 391 (YRGMG) contribute to the IMP site. The active-site Proton acceptor is the arginine 403. Glutamate 417 is an IMP binding site. Positions 467–488 (AGLAESHPHDVQITKESPNYSF) are disordered. K(+) contacts are provided by glutamate 471, serine 472, and histidine 473.

It belongs to the IMPDH/GMPR family. Homotetramer. Requires K(+) as cofactor.

The catalysed reaction is IMP + NAD(+) + H2O = XMP + NADH + H(+). Its pathway is purine metabolism; XMP biosynthesis via de novo pathway; XMP from IMP: step 1/1. With respect to regulation, mycophenolic acid (MPA) is a non-competitive inhibitor that prevents formation of the closed enzyme conformation by binding to the same site as the amobile flap. In contrast, mizoribine monophosphate (MZP) is a competitive inhibitor that induces the closed conformation. MPA is a potent inhibitor of mammalian IMPDHs but a poor inhibitor of the bacterial enzymes. MZP is a more potent inhibitor of bacterial IMPDH. Its function is as follows. Catalyzes the conversion of inosine 5'-phosphate (IMP) to xanthosine 5'-phosphate (XMP), the first committed and rate-limiting step in the de novo synthesis of guanine nucleotides, and therefore plays an important role in the regulation of cell growth. The sequence is that of Inosine-5'-monophosphate dehydrogenase from Staphylococcus saprophyticus subsp. saprophyticus (strain ATCC 15305 / DSM 20229 / NCIMB 8711 / NCTC 7292 / S-41).